The primary structure comprises 463 residues: ATP synthase subunit beta (463 aa).

152-159 (GGAGVGKT) serves as a coordination point for ATP.

This sequence belongs to the ATPase alpha/beta chains family. F-type ATPases have 2 components, CF(1) - the catalytic core - and CF(0) - the membrane proton channel. CF(1) has five subunits: alpha(3), beta(3), gamma(1), delta(1), epsilon(1). CF(0) has three main subunits: a(1), b(2) and c(9-12). The alpha and beta chains form an alternating ring which encloses part of the gamma chain. CF(1) is attached to CF(0) by a central stalk formed by the gamma and epsilon chains, while a peripheral stalk is formed by the delta and b chains.

It is found in the cell inner membrane. It carries out the reaction ATP + H2O + 4 H(+)(in) = ADP + phosphate + 5 H(+)(out). Its function is as follows. Produces ATP from ADP in the presence of a proton gradient across the membrane. The catalytic sites are hosted primarily by the beta subunits. The protein is ATP synthase subunit beta of Shewanella putrefaciens (strain CN-32 / ATCC BAA-453).